The chain runs to 201 residues: Transcription factor MYB82 (201 aa).

2 consecutive HTH myb-type domains span residues Lys9–Leu61 and Arg62–Pro116. 2 consecutive DNA-binding regions (H-T-H motif) follow at residues Trp37–Leu61 and Trp89–Leu112. The disordered stretch occupies residues Leu112–Phe133.

Homodimer and heterodimer with GL1. Part of the WD40-bHLH-MYB complex. Interacts with BHLH012/MYC1 and BHLH042/TT8. Interacts (via N-terminus) with GL1 and GL3. Mainly expressed in the trichomes of new leaves.

It is found in the nucleus. In terms of biological role, transcription activation factor positively regulating trichomes development. Has a function nearly equivalent to that of GL1 and can complement gl1 mutants. The sequence is that of Transcription factor MYB82 (MYB82) from Arabidopsis thaliana (Mouse-ear cress).